Reading from the N-terminus, the 244-residue chain is Acidic leucine-rich nuclear phosphoprotein 32 family member A (244 aa).

LRR repeat units lie at residues 18–41, 43–64, 65–87, and 89–110; these read DVKE…TDEF, GLEF…PKLN, KLKK…AEKC, and NLTH…EPLK. The LRRCT domain maps to 123–161; that stretch reads CEVTNLNDYRENLFKLLPQLTYLDGYDRDDKEAPDSDAE. The tract at residues 148-244 is disordered; the sequence is YDRDDKEAPD…DQDDEGEDDD (97 aa). A compositionally biased stretch (acidic residues) spans 157–227; sequence DSDAEGYVEG…EEDEGDEEAE (71 aa).

It belongs to the ANP32 family. In terms of processing, phosphorylated on serine residues.

The protein localises to the nucleus. It is found in the cytoplasm. Its subcellular location is the endoplasmic reticulum. Its function is as follows. Implicated in a number of cellular processes, including proliferation, differentiation, caspase-dependent and caspase-independent apoptosis, suppression of transformation (tumor suppressor), inhibition of protein phosphatase 2A, regulation of mRNA trafficking and stability, and inhibition of acetyltransferases as part of the INHAT (inhibitor of histone acetyltransferases) complex. The polypeptide is Acidic leucine-rich nuclear phosphoprotein 32 family member A (anp32a) (Xenopus laevis (African clawed frog)).